Consider the following 246-residue polypeptide: Ribulose-phosphate 3-epimerase (246 aa).

Substrate is bound at residue Ser9. A divalent metal cation-binding residues include His34, Asp36, and His83. The active-site Proton acceptor is the Asp36. Substrate contacts are provided by residues His83, 159 to 162 (GFGG), 188 to 190 (DGG), and 210 to 212 (GTS). Asp188 contributes to the a divalent metal cation binding site. Catalysis depends on Asp188, which acts as the Proton donor.

It belongs to the ribulose-phosphate 3-epimerase family. The cofactor is Co(2+). It depends on Fe(2+) as a cofactor. Requires Mn(2+) as cofactor. Zn(2+) serves as cofactor.

The enzyme catalyses D-ribulose 5-phosphate = D-xylulose 5-phosphate. The protein operates within carbohydrate degradation; pentose phosphate pathway; D-xylulose 5-phosphate from D-ribulose 5-phosphate (non-oxidative stage): step 1/1. Functionally, catalyzes the reversible epimerization of D-ribulose 5-phosphate to D-xylulose 5-phosphate. This is Ribulose-phosphate 3-epimerase (RPE1) from Candida glabrata (strain ATCC 2001 / BCRC 20586 / JCM 3761 / NBRC 0622 / NRRL Y-65 / CBS 138) (Yeast).